The sequence spans 449 residues: Hyaluronidase (449 aa).

Positions 1–23 are cleaved as a signal peptide; the sequence is MYHLWIKCLAAWIFLKRFNGVHV. 2 disulfide bridges follow: Cys-47–Cys-340 and Cys-211–Cys-227. Residues Asn-67, Asn-103, and Asn-111 are each glycosylated (N-linked (GlcNAc...) asparagine). Residue Glu-135 is the Proton donor of the active site. Asn-153 is a glycosylation site (N-linked (GlcNAc...) asparagine). Asn-357 carries an N-linked (GlcNAc...) asparagine glycan. Cystine bridges form between Cys-365–Cys-376, Cys-370–Cys-427, and Cys-429–Cys-438. N-linked (GlcNAc...) asparagine glycosylation is present at Asn-401. Positions 427–438 constitute an EGF-like domain; that stretch reads CQCYQGWKGLYC.

The protein belongs to the glycosyl hydrolase 56 family. In terms of assembly, monomer. In terms of tissue distribution, expressed by the venom gland.

It localises to the secreted. The enzyme catalyses Random hydrolysis of (1-&gt;4)-linkages between N-acetyl-beta-D-glucosamine and D-glucuronate residues in hyaluronate.. Snake venom endo-hyaluronidase that degrades hyaluronan to smaller oligosaccharide fragments. In venom, it is not toxic by itself, but increases the diffusion of other venom proteins by degrading the extracellular matrix. In addition, it displays antiedematogenic activity. The protein is Hyaluronidase of Crotalus adamanteus (Eastern diamondback rattlesnake).